We begin with the raw amino-acid sequence, 2912 residues long: Fibrillin-2 (2912 aa).

The first 28 residues, 1-28 (MGRRRRLCLQLYFLWLGCVVLWAQGTAG), serve as a signal peptide directing secretion. The segment at 27 to 52 (AGQPQPPPPKPPRPQPPPQQVRSATA) is disordered. Positions 29–77 (QPQPPPPKPPRPQPPPQQVRSATAGSEGGFLAPEYREEGAAVASRVRRR) are excised as a propeptide. A compositionally biased stretch (pro residues) spans 30–45 (PQPPPPKPPRPQPPPQ). EGF-like domains follow at residues 111 to 142 (IVPICRNSCGDGFCSRPNMCTCSSGQISSTCG), 145 to 176 (SIQQCSVRCMNGGTCADDHCQCQKGYIGTYCG), and 176 to 208 (GQPVCENGCQNGGRCIGPNRCACVYGFTGPQCE). 9 cysteine pairs are disulfide-bonded: cysteine 115–cysteine 124, cysteine 119–cysteine 130, cysteine 132–cysteine 141, cysteine 149–cysteine 159, cysteine 153–cysteine 164, cysteine 166–cysteine 175, cysteine 180–cysteine 190, cysteine 184–cysteine 196, and cysteine 198–cysteine 207. An interaction with MFAP4 region spans residues 149–359 (CSVRCMNGGT…VTSTDGSRCI (211 aa)). Residues 214 to 266 (GPCFTQVNNQMCQGQLTGIVCTKTLCCATIGRAWGHPCEMCPAQPQPCRRGFI) form the TB 1 domain. Residues 276-317 (DVDECQAIPGICQGGNCINTVGSFECRCPAGHKQSETTQKCE) enclose the EGF-like 4; calcium-binding domain. 6 disulfide bridges follow: cysteine 280-cysteine 292, cysteine 287-cysteine 301, cysteine 303-cysteine 316, cysteine 322-cysteine 334, cysteine 329-cysteine 343, and cysteine 345-cysteine 358. Serine 298 carries an O-linked (Glc) serine glycan. Positions 318–359 (DIDECSIIPGICETGECSNTVGSYFCVCPRGYVTSTDGSRCI) constitute an EGF-like 5; calcium-binding domain. Residue serine 340 is glycosylated (O-linked (Glc) serine). The region spanning 364-417 (GMCFSGLVNGRCAQELPGRMTKMQCCCEPGRCWGIGTIPEACPVRGSEEYRRLC) is the TB 2 domain. Residue asparagine 492 is glycosylated (N-linked (GlcNAc...) asparagine). The region spanning 494-534 (TIDICKHHANLCLNGRCIPTVSSYRCECNMGYKQDANGDCI) is the EGF-like 6 domain. Disulfide bonds link cysteine 498/cysteine 510, cysteine 505/cysteine 519, cysteine 521/cysteine 533, cysteine 539/cysteine 549, cysteine 544/cysteine 558, cysteine 560/cysteine 573, cysteine 579/cysteine 591, cysteine 586/cysteine 600, cysteine 602/cysteine 615, cysteine 621/cysteine 632, cysteine 627/cysteine 641, cysteine 643/cysteine 656, cysteine 662/cysteine 673, cysteine 668/cysteine 682, and cysteine 684/cysteine 697. An O-linked (Glc) serine glycan is attached at serine 516. In terms of domain architecture, EGF-like 7; calcium-binding spans 535–574 (DVDECTSNPCTNGDCVNTPGSYYCKCHAGFQRTPTKQACI). The O-linked (Glc) serine glycan is linked to serine 555. Positions 575–616 (DIDECIQNGVLCKNGRCVNTDGSFQCICNAGFELTTDGKNCV) constitute an EGF-like 8; calcium-binding domain. O-linked (Glc) serine glycosylation occurs at serine 597. Residues 617–657 (DHDECTTTNMCLNGMCINEDGSFKCICKPGFVLAPNGRYCT) form the EGF-like 9; calcium-binding domain. A glycan (O-linked (Glc) serine) is linked at serine 638. In terms of domain architecture, EGF-like 10; calcium-binding spans 658–698 (DVDECQTPGICMNGHCINSEGSFRCDCPPGLAVGMDGRVCV). O-linked (Glc) serine glycosylation is present at serine 679. Residues 704–756 (STCYGGIKKGVCVRPFPGAVTKSECCCANPDYGFGEPCQPCPAKNSAEFHGLC) form the TB 3 domain. The region spanning 768-809 (DINECALDPDICANGICENLRGSYRCNCNSGYEPDASGRNCI) is the EGF-like 11; calcium-binding domain. 9 disulfides stabilise this stretch: cysteine 772/cysteine 784, cysteine 779/cysteine 793, cysteine 795/cysteine 808, cysteine 814/cysteine 826, cysteine 821/cysteine 835, cysteine 837/cysteine 850, cysteine 856/cysteine 866, cysteine 861/cysteine 875, and cysteine 877/cysteine 890. The 42-residue stretch at 810-851 (DIDECLVNRLLCDNGLCRNTPGSYSCTCPPGYVFRTETETCE) folds into the EGF-like 12; calcium-binding domain. Serine 832 carries an O-linked (Glc) serine glycan. An EGF-like 13; calcium-binding domain is found at 852–891 (DINECESNPCVNGACRNNLGSFNCECSPGSKLSSTGLICI). The O-linked (Glc) serine glycan is linked to serine 872. Residues 896–947 (GTCWLNIQDSRCEVNINGATLKSECCATLGAAWGSPCERCELDTACPRGLAR) enclose the TB 4 domain. Residues 955 to 996 (DVNECEVFPGVCPNGRCVNSKGSFHCECPEGLTLDGTGRVCL) form the EGF-like 14; calcium-binding domain. Disulfide bonds link cysteine 959/cysteine 971, cysteine 966/cysteine 980, and cysteine 982/cysteine 995. A glycan (O-linked (Glc) serine) is linked at serine 977. Residues 1001–1052 (EQCYLKWDEDECIHPVPGKFRMDACCCAVGAAWGTECEECPKPGTKEYETLC) enclose the TB 5 domain. Positions 1073–1114 (DINECKAFPGMCTYGKCRNTIGSFKCRCNSGFALDMEERNCT) constitute an EGF-like 15; calcium-binding domain. 36 cysteine pairs are disulfide-bonded: cysteine 1077–cysteine 1089, cysteine 1084–cysteine 1098, cysteine 1100–cysteine 1113, cysteine 1119–cysteine 1131, cysteine 1126–cysteine 1140, cysteine 1142–cysteine 1156, cysteine 1162–cysteine 1174, cysteine 1169–cysteine 1183, cysteine 1185–cysteine 1198, cysteine 1204–cysteine 1216, cysteine 1211–cysteine 1225, cysteine 1227–cysteine 1240, cysteine 1246–cysteine 1257, cysteine 1253–cysteine 1266, cysteine 1268–cysteine 1281, cysteine 1287–cysteine 1299, cysteine 1294–cysteine 1308, cysteine 1310–cysteine 1323, cysteine 1329–cysteine 1341, cysteine 1336–cysteine 1350, cysteine 1352–cysteine 1365, cysteine 1371–cysteine 1384, cysteine 1378–cysteine 1393, cysteine 1395–cysteine 1406, cysteine 1412–cysteine 1425, cysteine 1419–cysteine 1434, cysteine 1436–cysteine 1447, cysteine 1453–cysteine 1465, cysteine 1460–cysteine 1474, cysteine 1476–cysteine 1489, cysteine 1495–cysteine 1506, cysteine 1501–cysteine 1515, cysteine 1517–cysteine 1530, cysteine 1536–cysteine 1547, cysteine 1542–cysteine 1556, and cysteine 1558–cysteine 1571. Serine 1095 carries O-linked (Glc) serine glycosylation. The N-linked (GlcNAc...) asparagine glycan is linked to asparagine 1112. An EGF-like 16; calcium-binding domain is found at 1115–1157 (DIDECRISPDLCGSGICVNTPGSFECECFEGYESGFMMMKNCM). The EGF-like 17; calcium-binding domain occupies 1158–1199 (DIDECERNPLLCRGGTCVNTEGSFQCDCPLGHELSPSREDCV). A glycan (O-linked (Glc) serine) is linked at serine 1180. The region spanning 1200-1241 (DINECSLSDNLCRNGKCVNMIGTYQCSCNPGYQATPDRQGCT) is the EGF-like 18; calcium-binding domain. An O-linked (Glc) threonine glycan is attached at threonine 1222. One can recognise an EGF-like 19; calcium-binding domain in the interval 1242 to 1282 (DIDECMIMNGGCDTQCTNSEGSYECSCSEGYALMPDGRSCA). Serine 1263 is a glycosylation site (O-linked (Glc) serine). The EGF-like 20; calcium-binding domain occupies 1283 to 1324 (DIDECENNPDICDGGQCTNIPGEYRCLCYDGFMASMDMKTCI). The region spanning 1325–1366 (DVNECDLNSNICMFGECENTKGSFICHCQLGYSVKKGTTGCT) is the EGF-like 21; calcium-binding domain. A glycan (O-linked (Glc) serine) is linked at serine 1347. An EGF-like 22; calcium-binding domain is found at 1367 to 1407 (DVDECEIGAHNCDMHASCLNIPGSFKCSCREGWIGNGIKCI). Serine 1390 carries an O-linked (Glc) serine glycan. One can recognise an EGF-like 23; calcium-binding domain in the interval 1408-1448 (DLDECSNGTHQCSINAQCVNTPGSYRCACSEGFTGDGFTCS). The N-linked (GlcNAc...) asparagine glycan is linked to asparagine 1414. Positions 1449 to 1490 (DVDECAENINLCENGQCLNVPGAYRCECEMGFTPASDSRSCQ) constitute an EGF-like 24; calcium-binding domain. The 41-residue stretch at 1491–1531 (DIDECSFQNICVFGTCNNLPGMFHCICDDGYELDRTGGNCT) folds into the EGF-like 25; calcium-binding domain. N-linked (GlcNAc...) asparagine glycosylation occurs at asparagine 1529. In terms of domain architecture, EGF-like 26; calcium-binding spans 1532–1572 (DIDECADPINCVNGLCVNTPGRYECNCPPDFQLNPTGVGCV). A TB 6 domain is found at 1577-1633 (GNCYLKFGPRGDGSLSCNTEIGVGVSRSSCCCSLGKAWGNPCETCPPVNSTEYYTLC). Asparagine 1625 carries N-linked (GlcNAc...) asparagine glycosylation. The EGF-like 27; calcium-binding domain maps to 1650–1691 (DIDECQELPGLCQGGNCINTFGSFQCECPQGYYLSEDTRICE). Cystine bridges form between cysteine 1654–cysteine 1666, cysteine 1661–cysteine 1675, cysteine 1677–cysteine 1690, cysteine 1696–cysteine 1708, cysteine 1703–cysteine 1717, and cysteine 1719–cysteine 1732. Serine 1672 is a glycosylation site (O-linked (Glc) serine). Residues 1692 to 1733 (DIDECFAHPGVCGPGTCYNTLGNYTCICPPEYMQVNGGHNCM) form the EGF-like 28; calcium-binding domain. Asparagine 1714 is a glycosylation site (N-linked (GlcNAc...) asparagine). The segment at 1735–2171 (MRKSFCYRSY…VPSLHDTRED (437 aa)) is interaction with MFAP4. In terms of domain architecture, TB 7 spans 1738–1791 (SFCYRSYNGTTCENELPFNVTKRMCCCTYNVGKAWNKPCEPCPTPGTADFKTIC). Residues asparagine 1745 and asparagine 1756 are each glycosylated (N-linked (GlcNAc...) asparagine). One can recognise an EGF-like 29; calcium-binding domain in the interval 1808-1849 (DIDECKEIPGICANGVCINQIGSFRCECPTGFSYNDLLLVCE). 21 disulfide bridges follow: cysteine 1812-cysteine 1824, cysteine 1819-cysteine 1833, cysteine 1835-cysteine 1848, cysteine 1854-cysteine 1867, cysteine 1861-cysteine 1876, cysteine 1878-cysteine 1890, cysteine 1896-cysteine 1908, cysteine 1903-cysteine 1917, cysteine 1919-cysteine 1932, cysteine 1938-cysteine 1948, cysteine 1943-cysteine 1957, cysteine 1959-cysteine 1971, cysteine 1977-cysteine 1990, cysteine 1985-cysteine 1999, cysteine 2001-cysteine 2014, cysteine 2020-cysteine 2032, cysteine 2027-cysteine 2041, cysteine 2043-cysteine 2054, cysteine 2060-cysteine 2072, cysteine 2067-cysteine 2081, and cysteine 2083-cysteine 2096. In terms of domain architecture, EGF-like 30; calcium-binding spans 1850–1891 (DIDECSNGDNLCQRNADCINSPGSYRCECAAGFKLSPNGACV). Serine 1873 is a glycosylation site (O-linked (Glc) serine). In terms of domain architecture, EGF-like 31; calcium-binding spans 1892-1933 (DRNECLEIPNVCSHGLCVDLQGSYQCICHNGFKASQDQTMCM). The EGF-like 32; calcium-binding domain occupies 1934–1972 (DVDECERHPCGNGTCKNTVGSYNCLCYPGFELTHNNDCL). An N-linked (GlcNAc...) asparagine glycan is attached at asparagine 1945. A glycan (O-linked (Glc) serine) is linked at serine 1954. The EGF-like 33; calcium-binding domain occupies 1973–2015 (DIDECSSFFGQVCRNGRCFNEIGSFKCLCNEGYELTPDGKNCI). The O-linked (Glc) serine glycan is linked to serine 1996. The EGF-like 34; calcium-binding domain occupies 2016–2055 (DTNECVALPGSCSPGTCQNLEGSFRCICPPGYEVKSENCI). Residues 2056 to 2097 (DINECDEDPNICLFGSCTNTPGGFQCLCPPGFVLSDNGRRCF) form the EGF-like 35; calcium-binding domain. The TB 8 domain occupies 2102–2155 (SFCFTNFENGKCSVPKAFNTTKAKCCCSKMPGEGWGDPCELCPKDDEVAFQDLC). A glycan (N-linked (GlcNAc...) asparagine) is linked at asparagine 2120. An EGF-like 36; calcium-binding domain is found at 2171–2212 (DVNECLESPGICSNGQCINTDGSFRCECPMGYNLDYTGVRCV). Disulfide bonds link cysteine 2175–cysteine 2187, cysteine 2182–cysteine 2196, cysteine 2198–cysteine 2211, cysteine 2217–cysteine 2228, cysteine 2223–cysteine 2237, cysteine 2239–cysteine 2251, cysteine 2257–cysteine 2268, cysteine 2264–cysteine 2277, cysteine 2279–cysteine 2292, cysteine 2298–cysteine 2312, cysteine 2305–cysteine 2321, cysteine 2323–cysteine 2336, cysteine 2342–cysteine 2354, cysteine 2349–cysteine 2363, and cysteine 2365–cysteine 2378. Serine 2193 carries O-linked (Glc) serine glycosylation. The EGF-like 37; calcium-binding domain occupies 2213–2252 (DTDECSIGNPCGNGTCTNVIGSFECNCNEGFEPGPMMNCE). Asparagine 2225 carries an N-linked (GlcNAc...) asparagine glycan. The EGF-like 38; calcium-binding domain occupies 2253–2293 (DINECAQNPLLCAFRCMNTFGSYECTCPIGYALREDQKMCK). The O-linked (Glc) serine glycan is linked to serine 2274. Positions 2294-2337 (DLDECAEGLHDCESRGMMCKNLIGTFMCICPPGMARRPDGEGCV) constitute an EGF-like 39; calcium-binding domain. The 42-residue stretch at 2338-2379 (DENECRTKPGICENGRCVNIIGSYRCECNEGFQSSSSGTECL) folds into the EGF-like 40; calcium-binding domain. Serine 2360 is a glycosylation site (O-linked (Glc) serine). Positions 2384–2437 (GLCFAEVLQTICQMASSSRNLVTKSECCCDGGRGWGHQCELCPLPGTAQYKKIC) constitute a TB 9 domain. The EGF-like 41; calcium-binding domain maps to 2449–2490 (DIDECKVMPNLCTNGQCINTMGSFRCFCKVGYTTDISGTSCI). Intrachain disulfides connect cysteine 2453-cysteine 2465, cysteine 2460-cysteine 2474, cysteine 2476-cysteine 2489, cysteine 2495-cysteine 2506, cysteine 2502-cysteine 2515, cysteine 2517-cysteine 2530, cysteine 2536-cysteine 2547, cysteine 2543-cysteine 2556, cysteine 2558-cysteine 2569, cysteine 2575-cysteine 2588, cysteine 2582-cysteine 2597, cysteine 2599-cysteine 2612, cysteine 2618-cysteine 2628, cysteine 2624-cysteine 2637, cysteine 2639-cysteine 2652, cysteine 2658-cysteine 2669, cysteine 2664-cysteine 2678, cysteine 2680-cysteine 2693, cysteine 2699-cysteine 2710, cysteine 2706-cysteine 2719, and cysteine 2721-cysteine 2733. Serine 2471 carries an O-linked (Glc) serine glycan. Residues 2491 to 2531 (DLDECSQSPKPCNYICKNTEGSYQCSCPRGYVLQEDGKTCK) enclose the EGF-like 42; calcium-binding domain. A glycan (O-linked (Glc) serine) is linked at serine 2512. In terms of domain architecture, EGF-like 43; calcium-binding spans 2532 to 2570 (DLDECQTKQHNCQFLCVNTLGGFTCKCPPGFTQHHTACI). Residues 2571–2613 (DNNECGSQPSLCGAKGICQNTPGSFSCECQRGFSLDATGLNCE) enclose the EGF-like 44; calcium-binding domain. The O-linked (Glc) serine glycan is linked to serine 2594. The 40-residue stretch at 2614 to 2653 (DVDECDGNHRCQHGCQNILGGYRCGCPQGYIQHYQWNQCV) folds into the EGF-like 45; calcium-binding domain. Residues 2654–2694 (DENECSNPNACGSASCYNTLGSYKCACPSGFSFDQFSSACH) form the EGF-like 46; calcium-binding domain. Residue serine 2675 is glycosylated (O-linked (Glc) serine). The EGF-like 47; calcium-binding domain occupies 2695–2734 (DVNECSSSKNPCNYGCSNTEGGYLCGCPPGYYRVGQGHCV). Asparagine 2808 is a glycosylation site (N-linked (GlcNAc...) asparagine).

The protein belongs to the fibrillin family. In terms of assembly, interacts with BMP2, BMP4, BMP7, BMP10 and GDF5. Interacts with MFAP2 and MFAP5. Interacts with ADAMTSL5. Interacts with MFAP4. Post-translationally, N-glycosylated. O-glycosylated on serine residues by POGLUT2 and POGLUT3. In terms of tissue distribution, almost exclusively expressed in placenta. Expressed at much lower level in other tissues. Expressed in fetal eye (18 weeks)in the retinal pigment epithelium (RPE), the choroid, Bruch's membrane and in the sclera. Not expressed in the neural retina. Present at high level in cytotrophoblasts as compared with syncytiotrophoblasts at 8-9 weeks of pregnancy (at protein level). Levels in the serum increase during pregnancy (at protein level).

It localises to the secreted. The protein localises to the extracellular space. Its subcellular location is the extracellular matrix. Fibrillins are structural components of 10-12 nm extracellular calcium-binding microfibrils, which occur either in association with elastin or in elastin-free bundles. Fibrillin-2-containing microfibrils regulate the early process of elastic fiber assembly. Regulates osteoblast maturation by controlling TGF-beta bioavailability and calibrating TGF-beta and BMP levels, respectively. Its function is as follows. Hormone secreted by trophoblasts that promotes trophoblast invasiveness. Has glucogenic activity: is able to increase plasma glucose levels. The sequence is that of Fibrillin-2 from Homo sapiens (Human).